Consider the following 442-residue polypeptide: 3-phosphoshikimate 1-carboxyvinyltransferase (442 aa).

Positions 1–11 are enriched in polar residues; the sequence is MQVSRPLTVSA. The tract at residues 1 to 25 is disordered; the sequence is MQVSRPLTVSASPKGLSGRTRVPGD. Residues lysine 26, serine 27, and arginine 31 each contribute to the 3-phosphoshikimate site. Lysine 26 contributes to the phosphoenolpyruvate binding site. 2 residues coordinate phosphoenolpyruvate: glycine 98 and arginine 126. Positions 171, 173, 324, and 351 each coordinate 3-phosphoshikimate. Glutamine 173 provides a ligand contact to phosphoenolpyruvate. The active-site Proton acceptor is the aspartate 324. Positions 355 and 398 each coordinate phosphoenolpyruvate.

It belongs to the EPSP synthase family. Monomer.

It localises to the cytoplasm. The enzyme catalyses 3-phosphoshikimate + phosphoenolpyruvate = 5-O-(1-carboxyvinyl)-3-phosphoshikimate + phosphate. It participates in metabolic intermediate biosynthesis; chorismate biosynthesis; chorismate from D-erythrose 4-phosphate and phosphoenolpyruvate: step 6/7. In terms of biological role, catalyzes the transfer of the enolpyruvyl moiety of phosphoenolpyruvate (PEP) to the 5-hydroxyl of shikimate-3-phosphate (S3P) to produce enolpyruvyl shikimate-3-phosphate and inorganic phosphate. In Gluconobacter oxydans (strain 621H) (Gluconobacter suboxydans), this protein is 3-phosphoshikimate 1-carboxyvinyltransferase.